The sequence spans 375 residues: DNA replication and repair protein RecF (375 aa).

30–37 is a binding site for ATP; sequence GDNAQGKS.

It belongs to the RecF family.

The protein resides in the cytoplasm. In terms of biological role, the RecF protein is involved in DNA metabolism; it is required for DNA replication and normal SOS inducibility. RecF binds preferentially to single-stranded, linear DNA. It also seems to bind ATP. This is DNA replication and repair protein RecF from Gloeobacter violaceus (strain ATCC 29082 / PCC 7421).